The primary structure comprises 113 residues: uncharacterized protein (113 aa).

The first 16 residues, 1 to 16 (MKCLVVLTALFGISTA), serve as a signal peptide directing secretion. Gly residues predominate over residues 81–101 (GGNGGNGGGGNGGNNGNGNGN). The tract at residues 81-103 (GGNGGNGGGGNGGNNGNGNGNNG) is disordered.

In terms of tissue distribution, nacreous layer of shell (at protein level).

It localises to the secreted. This is an uncharacterized protein from Margaritifera margaritifera (Freshwater pearl mussel).